Consider the following 632-residue polypeptide: Extracellular metalloproteinase 2 (632 aa).

The N-terminal stretch at 1-19 is a signal peptide; it reads MHGLLLAGLAAALPLGVAG. Positions 20-244 are excised as a propeptide; the sequence is LPARQQSGLS…VHNVVDYVAS (225 aa). An N-linked (GlcNAc...) asparagine glycan is attached at asparagine 270. Residue histidine 429 coordinates Zn(2+). Glutamate 430 is an active-site residue. Histidine 433 contacts Zn(2+).

The protein belongs to the peptidase M36 family. Zn(2+) is required as a cofactor.

It localises to the secreted. In terms of biological role, secreted metalloproteinase probably acting as a virulence factor. The sequence is that of Extracellular metalloproteinase 2 (MEP2) from Trichophyton rubrum (Athlete's foot fungus).